We begin with the raw amino-acid sequence, 399 residues long: Chorismate synthase (399 aa).

2 residues coordinate NADP(+): Arg-40 and Arg-46. Residues Arg-135–Ser-137, Gln-256–Ala-257, Gly-301, Lys-316–Thr-320, and Arg-342 contribute to the FMN site.

The protein belongs to the chorismate synthase family. In terms of assembly, homotetramer. Requires FMNH2 as cofactor.

The catalysed reaction is 5-O-(1-carboxyvinyl)-3-phosphoshikimate = chorismate + phosphate. It participates in metabolic intermediate biosynthesis; chorismate biosynthesis; chorismate from D-erythrose 4-phosphate and phosphoenolpyruvate: step 7/7. In terms of biological role, catalyzes the anti-1,4-elimination of the C-3 phosphate and the C-6 proR hydrogen from 5-enolpyruvylshikimate-3-phosphate (EPSP) to yield chorismate, which is the branch point compound that serves as the starting substrate for the three terminal pathways of aromatic amino acid biosynthesis. This reaction introduces a second double bond into the aromatic ring system. The protein is Chorismate synthase of Pseudarthrobacter chlorophenolicus (strain ATCC 700700 / DSM 12829 / CIP 107037 / JCM 12360 / KCTC 9906 / NCIMB 13794 / A6) (Arthrobacter chlorophenolicus).